The primary structure comprises 353 residues: ATPase GET3 (353 aa).

ATP is bound at residue 26 to 33 (KGGVGKTT). The active site involves Asp57. 2 residues coordinate ATP: Glu244 and Asn271. Zn(2+) contacts are provided by Cys284 and Cys287.

Belongs to the arsA ATPase family. As to quaternary structure, homodimer. Component of the Golgi to ER traffic (GET) complex, which is composed of GET1, GET2 and GET3. Within the complex, GET1 and GET2 form a heterotetramer which is stabilized by phosphatidylinositol binding and which binds to the GET3 homodimer. Interacts with the chloride channel protein GEF1.

It is found in the cytoplasm. Its subcellular location is the endoplasmic reticulum. The protein localises to the golgi apparatus. ATPase required for the post-translational delivery of tail-anchored (TA) proteins to the endoplasmic reticulum. Recognizes and selectively binds the transmembrane domain of TA proteins in the cytosol. This complex then targets to the endoplasmic reticulum by membrane-bound receptors GET1 and GET2, where the tail-anchored protein is released for insertion. This process is regulated by ATP binding and hydrolysis. ATP binding drives the homodimer towards the closed dimer state, facilitating recognition of newly synthesized TA membrane proteins. ATP hydrolysis is required for insertion. Subsequently, the homodimer reverts towards the open dimer state, lowering its affinity for the GET1-GET2 receptor, and returning it to the cytosol to initiate a new round of targeting. Cooperates with the HDEL receptor ERD2 to mediate the ATP-dependent retrieval of resident ER proteins that contain a C-terminal H-D-E-L retention signal from the Golgi to the ER. Involved in low-level resistance to the oxyanions arsenite and arsenate, and in heat tolerance. This chain is ATPase GET3, found in Zygosaccharomyces rouxii (strain ATCC 2623 / CBS 732 / NBRC 1130 / NCYC 568 / NRRL Y-229).